Consider the following 1095-residue polypeptide: Formin-like protein 2 (1095 aa).

One can recognise a GBD/FH3 domain in the interval 23-469 (LPMPEPGELE…EAIQRQSTLE (447 aa)). The stretch at 381-478 (LLEDAETKNA…EKKIHELEKQ (98 aa)) forms a coiled coil. The interval 521–602 (PSSGPLPPPP…PSAPPLPGTS (82 aa)) is disordered. Composition is skewed to pro residues over residues 524 to 534 (GPLPPPPPPLP), 548 to 576 (ATPP…PLPG), and 583 to 599 (PAPP…PPLP). The 392-residue stretch at 617-1008 (IKKPIKTKFR…LMEKLLEQEA (392 aa)) folds into the FH2 domain.

This sequence belongs to the formin homology family. Interacts with TCP11L2; this interaction promotes muscle-derived satellite cell (MDSC) migration and differentiation.

It localises to the cytoplasm. Its function is as follows. Plays a role in the regulation of cell morphology and cytoskeletal organization. Required in the cortical actin filament dynamics. This is Formin-like protein 2 from Bos taurus (Bovine).